The primary structure comprises 594 residues: Golgi-associated RAB2 interactor protein 4 (594 aa).

The disordered stretch occupies residues 387–524 (MDAAAGPPVS…TSSGSSKGLG (138 aa)). Positions 396-406 (STRQSKSSLSG) are enriched in polar residues. 3 stretches are compositionally biased toward basic and acidic residues: residues 408-433 (HGRE…DRAL), 442-455 (TGES…DKIA), and 468-477 (ANRDDKKEKG). Residues 511 to 520 (SLWTTSSGSS) are compositionally biased toward polar residues.

It belongs to the GARIN family. In terms of assembly, interacts (via N-terminus) with RAB2B (in GTP-bound form).

The protein localises to the golgi apparatus. Its function is as follows. RAB2B effector protein required for the compacted Golgi morphology, probably through interaction with small GTPase RAB2B. The polypeptide is Golgi-associated RAB2 interactor protein 4 (Homo sapiens (Human)).